A 149-amino-acid chain; its full sequence is Transcriptional repressor NrdR (149 aa).

The segment at 3 to 34 (CPFCGHLETQVVETRISEDAEFIRRRRQCGAC) is a zinc-finger region. An ATP-cone domain is found at 49 to 139 (PSIVKKDGRR…VYRSFEDIDE (91 aa)).

This sequence belongs to the NrdR family. Requires Zn(2+) as cofactor.

In terms of biological role, negatively regulates transcription of bacterial ribonucleotide reductase nrd genes and operons by binding to NrdR-boxes. The sequence is that of Transcriptional repressor NrdR from Polaromonas naphthalenivorans (strain CJ2).